The following is a 66-amino-acid chain: Large ribosomal subunit protein bL31 (66 aa).

4 residues coordinate Zn(2+): cysteine 16, cysteine 18, cysteine 36, and cysteine 39.

The protein belongs to the bacterial ribosomal protein bL31 family. Type A subfamily. In terms of assembly, part of the 50S ribosomal subunit. Requires Zn(2+) as cofactor.

In terms of biological role, binds the 23S rRNA. In Natranaerobius thermophilus (strain ATCC BAA-1301 / DSM 18059 / JW/NM-WN-LF), this protein is Large ribosomal subunit protein bL31.